A 1056-amino-acid polypeptide reads, in one-letter code: MHSDSPMTGGGPSRLFILRPVATTLFMIAILLAGIIGYRMLPVSALPQVDYPTIQVVTLYPGASPDIMTSVVTAPLERQFGKISGLKQMTSQSSGGASVITLVFQLSLPLDVAEQDVQAAINAATNLLPNDLPYPPIYSKVNPADPPILTLAVTSDALPMIQVQDMVETRIAQRISQVGGVGLVTLAGGQRPAVRVKFNAQAIAAHGLNSETIRTTIMNANVSSAKGSFDGPTRSVTLTTNDQMKSIDEYRNLIVAYKNGAPIRLRDVATIERGAENTKLGAWANEKPAIVINVQRQPGANVIDTTDNIRAMLPELINSLPKSVNMDILTDRTVTIRASVQDVQFELLLAIALVVMVIYVFLRNATATLIPSIAVPLSLVGTFAVMYFCGFSVNNLTLMALTIAAGFVVDDAIVVIENISRYIERGEKPMAAALKGAGEIGFTIISLTFSLIAVLIPLLFMGDIVGRLFREFAITLAVAILISAVVSLTLTPMMCARMLKAEAEIKHNRFEQASEHFFERIIAIYGGWLKRVLNHPWITLGVAFSTLAFTALLYLTIPKGFFPLQDNGLIQGTLEAPQSISFNAMSDKQREVTALLLQDPDVENVTTFIGVDGSNSTLNSGRLQITLKPLNQRDIRVDEIIPRLQARVANVPDVKLYLQPTQDLTIDTQVARTQYQFTLQGTVSNDLNIWVPKLQEALKQRPELVDVGTDWQNRGLVAYINVNRDMASRLGISMTAIDNALYNAFGQRLISTIYTQANQYRVILEQDTQNEAGMNAFNNVHLIGTDNKVVPLSTIATVEQQLGYLSINHLQQFPAVTFSFNVAQEASLEAAVNAVKETERSIGMPKNINTQFQGATLAFQDALGNTLWLILAAVISMYIVLGILYESFIHPVTILSTLPTAGVGALLALMVGGYELDIIAIIGIILLIGIVKKNAIMMIDFALAAEREKGMSPYDAIFQACLLRFRPILMTTMAALLGALPLMLSTGIGAELRRPLGICMVGGLIMSQILTLFTTPVIYLLFDRLANYFKNKRQNRLQSQNQRELDHSPVNHQEPL.

Transmembrane regions (helical) follow at residues 16 to 36, 342 to 362, 373 to 393, 396 to 416, 440 to 460, 472 to 492, 537 to 557, 869 to 889, 890 to 910, 911 to 931, 968 to 988, and 1002 to 1022; these read FILR…AGII, DVQF…YVFL, IAVP…GFSV, LTLM…IVVI, IGFT…PLLF, FAIT…TLTP, WITL…YLTI, LILA…ESFI, HPVT…LALM, VGGY…IGIV, ILMT…STGI, and GGLI…YLLF. The tract at residues 1037–1056 is disordered; that stretch reads LQSQNQRELDHSPVNHQEPL. Residues 1043 to 1056 show a composition bias toward basic and acidic residues; it reads RELDHSPVNHQEPL.

This sequence belongs to the resistance-nodulation-cell division (RND) (TC 2.A.6) family. MdtB subfamily. Part of a tripartite efflux system composed of MdtA, MdtB and MdtC. MdtB forms a heteromultimer with MdtC.

It localises to the cell inner membrane. The chain is Multidrug resistance protein MdtB from Xenorhabdus bovienii (strain SS-2004) (Xenorhabdus nematophila subsp. bovienii).